The primary structure comprises 337 residues: Secreted effector protein EspF(U) (337 aa).

Repeat copies occupy residues 96–142 (IKPA…AEHG), 143–189 (IQPA…AEHG), 190–236 (IQPA…AEHG), 237–283 (IQPA…AEHG), and 284–330 (IQPA…AEHG). A 5 X 48 AA approximate tandem repeats region spans residues 96–330 (IKPARSMAEH…RLMQHLAEHG (235 aa)). A disordered region spans residues 291–312 (AEHIPPAPNWPAPTPPVQNEQS). Positions 295 to 306 (PPAPNWPAPTPP) are enriched in pro residues.

Belongs to the EspF(U)/TccP family. As to quaternary structure, interacts with host BAIAP2 and host WASL/N-WASP. Can also interact with host proteins BAIAP2L1 and WAS/WASP.

It is found in the secreted. The protein localises to the host cytoplasm. Functionally, required for efficient pedestal formation in host epithelial cells during infection. Acts as an intermediate between Tir (via host BAIAP2) and host WASL/N-WASP. Directly binds and activates WASL/N-WASP, which stimulates actin polymerization and leads to the formation of actin pedestals at the sites of bacterial adhesion. This chain is Secreted effector protein EspF(U) (espF(U)), found in Escherichia coli O157:H7.